The following is a 48-amino-acid chain: ATP synthase protein 8 (48 aa).

A helical membrane pass occupies residues 13–32 (LTYGFLLMITLLILFSQFFL).

This sequence belongs to the ATPase protein 8 family. F-type ATPases have 2 components, CF(1) - the catalytic core - and CF(0) - the membrane proton channel. In yeast, the dimeric form of ATP synthase consists of 17 polypeptides: alpha, beta, gamma, delta, epsilon, 4 (B), 5 (OSCP), 6 (A), 8, 9 (C), d, E (Tim11), f, g, h, i/j and k.

The protein localises to the mitochondrion membrane. Mitochondrial membrane ATP synthase (F(1)F(0) ATP synthase or Complex V) produces ATP from ADP in the presence of a proton gradient across the membrane which is generated by electron transport complexes of the respiratory chain. F-type ATPases consist of two structural domains, F(1) - containing the extramembraneous catalytic core and F(0) - containing the membrane proton channel, linked together by a central stalk and a peripheral stalk. During catalysis, ATP synthesis in the catalytic domain of F(1) is coupled via a rotary mechanism of the central stalk subunits to proton translocation. Part of the complex F(0) domain. Minor subunit located with subunit a in the membrane. In Saccharomyces cerevisiae (strain ATCC 204508 / S288c) (Baker's yeast), this protein is ATP synthase protein 8 (ATP8).